Reading from the N-terminus, the 1789-residue chain is MMMASKDVVPTAASSENANNNSSIKSRLLARLKGSGGATSPPNSIKITNQDMALGLIGQVPAPKATSVDVPKQQRDRPPRTVAEVQQNLRWTERPQDQNVKTWDELDHTTKQQILDEHAEWFDAGGLGPSTLPTSHERYTHENDEGHQVKWSAREGVDLGISGLTTVSGPEWNMCPLPPVDQRSTTPATEPTIGDMIEFYEGHIYHYAIYIGQGKTVGVHSPQAAFSITRITIQPISAWWRVCYVPQPKQRLTYDQLKELENEPWPYAAVTNNCFEFCCQVMCLEDTWLQRKLISSGRFYHPTQDWSRDTPEFQQDSKLEMVRDAVLAAINGLVSRPFKDLLGKLKPLNVLNLLSNCDWTFMGVVEMVVLLLELFGIFWNPPDVSNFIASLLPDFHLQGPEDLARDLVPIVLGGIGLAIGFTRDKVSKMMKNAVDGLRAATQLGQYGLEIFSLLKKYFFGGDQTEKTLKDIESAVIDMEVLSSTSVTQLVRDKQSARAYMAILDNEEEKARKLSVRNADPHVVSSTNALISRISMARAALAKAQAEMTSRMRPVVIMMCGPPGIGKTKAAEHLAKRLANEIRPGGKVGLVPREAVDHWDGYHGEEVMLWDDYGMTKIQEDCNKLQAIADSAPLTLNCDRIENKGMQFVSDAIVITTNAPGPAPVDFVNLGPVCRRVDFLVYCTAPEVEHTRKVSPGDTTALKDCFKPDFSHLKMELAPQGGFDNQGNTPFGKGVMKPTTINRLLIQAVALTMERQDEFQLQGPTYDFDTDRVAAFTRMARANGLGLISMASLGKKLRSVTTIEGLKNALSGYKISKCSIQWQSRVYIIESDGASVQIKEDKQALTPLQQTINTASLAITRLKAARAVAYASCFQSAITTILQMAGSALVINRAVKRMFGTRTAAMALEGPGKEHNCRVHKAKEAGKGPIGHDDMVERFGLCETEEEESEDQIQMVPSDAVPEGKNKGKTKKGRGRKNNYNAFSRRGLSDEEYEEYKKIREEKNGNYSIQEYLEDRQRYEEELAEVQAGGDGGIGETEMEIRHRVFYKSKSKKHQQEQRRQLGLVTGSDIRKRKPIDWTPPKNEWADDDREVDYNEKINFEAPPTLWSRVTKFGSGWGFWVSPTVFITTTHVVPTGVKEFFGEPLSSIAIHQAGEFTQFRFSKKMRPDLTGMVLEEGCPEGTVCSVLIKRDSGELLPLAVRMGAIASMRIQGRLVHGQSGMLLTGANAKGMDLGTIPGDCGAPYVHKRGNDWVVCGVHAAATKSGNTVVCAVQAGEGETALEGGDKGHYAGHEIVRYGSGPALSTKTKFWRSSPEPLPPGVYEPAYLGGKDPRVQNGPSLQQVLRDQLKPFADPRGRMPEPGLLEAAVETVTSMLEQTMDTPSPWSYADACQSLDKTTSSGYPHHKRKNDDWNGTTFVGELGEQAAHANNMYENAKHMKPIYTAALKDELVKPEKIYQKVKKRLLWGADLGTVVRAARAFGPFCDAIKSHVIKLPIKVGMNTIEDGPLIYAEHAKYKNHFDADYTAWDSTQNRQIMTESFSIMSRLTASPELAEVVAQDLLAPSEMDVGDYVIRVKEGLPSGFPCTSQVNSINHWIITLCALSEATGLSPDVVQSMSYFSFYGDDEIVSTDIDFDPARLTQILKEYGLKPTRPDKTEGPIQVRKNVDGLVFLRRTISRDAAGFQGRLDRASIERQIFWTRGPNHSDPSETLVPHTQRKIQLISLLGEASLHGEKFYRKISSKVIHEIKTGGLEMYVPGWQAMFRWMRFHDLGLWTGDRDLLPEFVNDDGV.

The segment at 1–25 is disordered; sequence MMMASKDVVPTAASSENANNNSSIK. The interval 1–183 is interaction with host MAP1LC3A/LC3; the sequence is MMMASKDVVP…MCPLPPVDQR (183 aa). A compositionally biased stretch (low complexity) spans 12–23; it reads AASSENANNNSS. The interaction with NTPase stretch occupies residues 184-398; it reads STTPATEPTI…ASLLPDFHLQ (215 aa). The interaction with NS4 stretch occupies residues 301-398; the sequence is HPTQDWSRDT…ASLLPDFHLQ (98 aa). Host ER membrane association stretches follow at residues 318–349 and 360–398; these read KLEM…KPLN and TFMG…FHLQ. The tract at residues 399-574 is interaction with NS1-2 and NS4 and homooligomerization; sequence GPEDLARDLV…GKTKAAEHLA (176 aa). The SF3 helicase domain maps to 532–697; sequence RISMARAALA…EHTRKVSPGD (166 aa). 560 to 567 is an ATP binding site; that stretch reads GPPGIGKT. Positions 651–756 are important for mitochondrion targeting; it reads AIVITTNAPG…AVALTMERQD (106 aa). The tract at residues 826 to 832 is functions as endoplasmic reticulum export signal; the sequence is YIIESDG. Residues 865-910 form a host membrane association region; that stretch reads RAVAYASCFQSAITTILQMAGSALVINRAVKRMFGTRTAAMALEGP. The disordered stretch occupies residues 958 to 981; it reads DAVPEGKNKGKTKKGRGRKNNYNA. A compositionally biased stretch (basic residues) spans 966–976; that stretch reads KGKTKKGRGRK. The interval 989-994 is acidic; that stretch reads DEEYEE. Tyrosine 992 bears the O-(5'-phospho-RNA)-tyrosine mark. An interaction with host EIF4G region spans residues 1084–1100; it reads WADDDREVDYNEKINFE. One can recognise a Peptidase C37 domain in the interval 1101–1281; that stretch reads APPTLWSRVT…QAGEGETALE (181 aa). Active-site for 3CLpro activity residues include histidine 1130, glutamate 1154, and cysteine 1239. One can recognise a RdRp catalytic domain in the interval 1516–1637; that stretch reads KNHFDADYTA…STDIDFDPAR (122 aa). The Mg(2+) site is built by aspartate 1520, aspartate 1522, aspartate 1624, and glutamate 1625.

In terms of assembly, homodimer. Homooligomer. Interacts with NTPase; this interaction increases the proapoptotic activity of the NTPase and is crucial for the formation of the viral replication complex. Interacts with NS4; this interaction is crucial for the formation of the viral replication complex. Interacts (via N-terminus) with host VAPA. Interacts with host MAP1LC3A/LC3; this interaction does not seem to be linked to host autophagy, but rather plays a role in the formation of viral factories. As to quaternary structure, homooligomer. Interacts with NS1-2; this interaction increases the proapoptotic activity of the NTPase and is crucial for the formation of the viral replication complex. Interacts with NS4; this interaction increases the proapoptotic activity of the NTPase. Homodimer. Monomer; in solution. In terms of assembly, interacts with NTPase; this interaction increases the proapoptotic activity of the NTPase. Interacts with NS1-2; this interaction is crucial for the formation of the viral replication complex. As to quaternary structure, monomer. Interacts with the RNA-directed RNA polymerase; this interaction induces the multimerization of the RdRp and enhances its activity. Interacts with host IEF4G1; this interaction plays a role in translation of viral proteins. Homohexamer; also forms fibrous hexameric oligomer. Interacts with the viral genome-linked protein; this interaction induces the multimerization of the RdRp and enhances its activity. It depends on Mg(2+) as a cofactor. Mn(2+) serves as cofactor. Post-translationally, specific enzymatic cleavages in vivo yield mature proteins. 3CLpro is first autocatalytically cleaved, then processes the whole polyprotein. NS1/2-3 and NS3-4 sites are cleaved rapidly and NS4-5, NS5-6, and NS6-7 sites are processed subsequently and less efficiently. VPg is uridylylated by the polymerase and is covalently attached to the 5'-end of the polyadenylated genomic and subgenomic RNAs. This uridylylated form acts as a nucleotide-peptide primer for the polymerase. In terms of processing, cleaved by host CASP3/caspase 3 at 18-22 h.p.i. The cleavage allows NS1 secretion, which is essential for intestinal infection and resistance to IFN-lambda.

It localises to the host Golgi apparatus membrane. The protein resides in the secreted. It is found in the host endoplasmic reticulum membrane. Its subcellular location is the host cytoplasm. The protein localises to the host perinuclear region. It catalyses the reaction a ribonucleoside 5'-triphosphate + H2O = a ribonucleoside 5'-diphosphate + phosphate + H(+). It carries out the reaction Endopeptidase with a preference for cleavage when the P1 position is occupied by Glu-|-Xaa and the P1' position is occupied by Gly-|-Yaa.. The enzyme catalyses RNA(n) + a ribonucleoside 5'-triphosphate = RNA(n+1) + diphosphate. Its activity is regulated as follows. Inhibited by the chemical compound K36/GC376, which covalently binds to the nucleophilic cysteine residue. Inhibited by various macrocyclic inhibitors. Inhibited by the guanidine salt GuHCl. Its function is as follows. Induces the proliferation of the host smooth ER membranes forming long tubular structures. These remodeled membranes probably form the viral factories that contain the replication complex. Induces the disassembly of host Golgi. May play a role in viral replication by interacting with host VAPA, a vesicle-associated membrane protein that plays a role in SNARE-mediated vesicle fusion. This interaction may target replication complex to intracellular membranes. Functionally, displays NTPase activity and RNA helix-unwinding activity. Displays RNA chaperone-like activity and destabilizes dsRNA. Induces the formation of convoluted membranes derived from the host ER. These remodeled membranes probably form the viral factories that contain the replication complex. Initiates host cell death by targeting the mitochondrial outer membrane, leading to the permeabilization of mitochondria, programmed host cell death and viral egress. Probably plays a role in preventing the assembly of host stress granules. Probable key protein responsible for the formation of membrane alterations by the virus. Induces the formation of convoluted membranes derived from the host ER. These remodeled membranes probably form the viral factories that contain the replication complex. May play a role in targeting replication complex to intracellular membranes. Induces the disassembly of host Golgi and antagonism of Golgi-dependent cellular protein secretion, probably via the mislocalization of COPII-coated vesicles. In terms of biological role, viral genome-linked protein is covalently linked to the 5'-end of the positive-strand, negative-strand genomic RNAs and subgenomic RNA. Acts as a genome-linked replication primer. May recruit ribosome to viral RNA thereby promoting viral proteins translation. Interacts with host translation initiation complex to allow the translation of viral proteins. Induces the formation of aggregates of RNA-directed RNA polymerase in the presence of RNA. Through its interaction with the viral RNA-directed RNA polymerase, plays a crucial role in enhancing the polymerase activity. Its function is as follows. Processes the polyprotein. 3CLpro-RdRp is first released by autocleavage, then all other proteins are cleaved. May cleave host polyadenylate-binding protein thereby inhibiting cellular translation. Functionally, replicates genomic and antigenomic RNA by recognizing replications specific signals. Also transcribes a subgenomic mRNA by initiating RNA synthesis internally on antigenomic RNA. This sgRNA codes for structural proteins. Catalyzes the covalent attachment VPg with viral RNAs. This is Genome polyprotein from Norovirus (strain Human/NoV/United States/Norwalk/1968/GI) (Hu/NV/NV/1968/US).